Here is a 2184-residue protein sequence, read N- to C-terminus: Chromodomain-helicase-DNA-binding protein 8 (2184 aa).

Disordered regions lie at residues 379–399 (VKTSTGGGESRKLDSQKKQEK) and 419–527 (IPRV…KRKK). The span at 387–399 (ESRKLDSQKKQEK) shows a compositional bias: basic and acidic residues. Residues 425-437 (EDELPSVNPEDDD) are compositionally biased toward acidic residues. A compositionally biased stretch (basic and acidic residues) spans 448 to 459 (GETSDRSKDEKP). Basic residues predominate over residues 516–527 (KRRSNRQVKRKK). 2 Chromo domains span residues 586 to 653 (AIVD…TQMQ) and 668 to 734 (VEVD…RVAR). The Helicase ATP-binding domain occupies 767 to 941 (LFNWYNRQNC…FSLLHFLEPT (175 aa)). 780-787 (DEMGLGKT) is a binding site for ATP. A DEAH box motif is present at residues 892–895 (DEAH). One can recognise a Helicase C-terminal domain in the interval 1081-1252 (LIDKLLPKLR…FTKKEIEDLL (172 aa)). Disordered regions lie at residues 1907 to 1989 (GISG…EESR) and 2039 to 2076 (WSSPRRLSDPPSDSPDSLPPTPEQQSPAHFTQIRPAPD). Low complexity-rich tracts occupy residues 1912–1961 (SRPS…SNSE) and 2040–2054 (SSPRRLSDPPSDSPD).

This sequence belongs to the SNF2/RAD54 helicase family. CHD8 subfamily. Component of some MLL1/MLL complex.

It is found in the nucleus. The catalysed reaction is ATP + H2O = ADP + phosphate + H(+). In terms of biological role, ATP-dependent chromatin-remodeling factor, it slides nucleosomes along DNA; nucleosome sliding requires ATP. Acts as a transcription repressor by remodeling chromatin structure and recruiting histone H1 to target genes. Suppresses p53/tp53-mediated apoptosis by recruiting histone H1 and preventing p53/tp53 transactivation activity. Acts as a negative regulator of Wnt signaling pathway by regulating beta-catenin (ctnnb1) activity. Negatively regulates ctnnb1-targeted gene expression by being recruited specifically to the promoter regions of several ctnnb1 responsive genes. May also act as a transcription activator by participating in efficient U6 RNA polymerase III transcription. This is Chromodomain-helicase-DNA-binding protein 8 from Xenopus tropicalis (Western clawed frog).